Consider the following 348-residue polypeptide: Rhodopsin (348 aa).

Residue M1 is modified to N-acetylmethionine. The Extracellular portion of the chain corresponds to M1–Q36. N2 and N15 each carry an N-linked (GlcNAc...) asparagine glycan. Residues F37–V61 form a helical membrane-spanning segment. Residues T62 to N73 are Cytoplasmic-facing. Residues Y74–Y96 traverse the membrane as a helical segment. Topologically, residues T97 to C110 are extracellular. A disulfide bridge connects residues C110 and C187. A helical membrane pass occupies residues N111–I133. Positions E134–Y136 match the 'Ionic lock' involved in activated form stabilization motif. At E134–H152 the chain is on the cytoplasmic side. Residues A153–V173 traverse the membrane as a helical segment. Topologically, residues G174–S202 are extracellular. Residue E201 participates in Zn(2+) binding. A helical membrane pass occupies residues F203–G224. The Cytoplasmic portion of the chain corresponds to Q225–R252. A helical membrane pass occupies residues M253–Y274. The Extracellular segment spans residues I275–I286. Zn(2+) is bound at residue Q279. Residues F287–M308 traverse the membrane as a helical segment. K296 is modified (N6-(retinylidene)lysine). Topologically, residues M309–A348 are cytoplasmic. 2 S-palmitoyl cysteine lipidation sites follow: C322 and C323. Residues D330–A348 are interaction with SAG. S334 is modified (phosphoserine). T336 carries the phosphothreonine modification. S338 carries the post-translational modification Phosphoserine. 2 positions are modified to phosphothreonine: T340 and T342. S343 carries the post-translational modification Phosphoserine.

This sequence belongs to the G-protein coupled receptor 1 family. Opsin subfamily. In terms of assembly, homodimer. May form a complex composed of RHO, GRK1 and RCVRN in a Ca(2+)-dependent manner; RCVRN prevents the interaction between GRK1 and RHO. Interacts with GRK1. Interacts (phosphorylated form) with SAG. Interacts with GNAT1. Interacts with GNAT3. SAG and G-proteins compete for a common binding site. Interacts with PRCD; the interaction promotes PRCD stability. Forms a complex with ASAP1 and ARF4. Forms a complex with ASAP1, RAB11A, Rabin8/RAB3IP, ARF4 and RAB11FIP3; the complex regulates Golgi-to-cilia rhodopsin/RHO transport in photoreceptors. Post-translationally, phosphorylated on some or all of the serine and threonine residues present in the C-terminal region. In terms of processing, contains one covalently linked retinal chromophore. Upon light absorption, the covalently bound 11-cis-retinal is converted to all-trans-retinal. After hydrolysis of the Schiff base and release of the covalently bound all-trans-retinal, active rhodopsin is regenerated by binding of a fresh molecule of 11-cis-retinal.

The protein localises to the membrane. Its subcellular location is the cell projection. It is found in the cilium. The protein resides in the photoreceptor outer segment. Its function is as follows. Photoreceptor required for image-forming vision at low light intensity. Required for photoreceptor cell viability after birth. Light-induced isomerization of 11-cis to all-trans retinal triggers a conformational change that activates signaling via G-proteins. Subsequent receptor phosphorylation mediates displacement of the bound G-protein alpha subunit by the arrestin SAG and terminates signaling. The sequence is that of Rhodopsin (RHO) from Cricetulus griseus (Chinese hamster).